The primary structure comprises 342 residues: MSKIIQAFHSSNKNYTPIWFMRQAGRYLPEYQVLKRTTNSFFELCYNPIKAAEATLQPIARFDFDAAIIFSDILVLPDSLGINIRFINNLCPTAEKIPNLLDLQKSKIQNTKISKVYEAIDIVRKKLNKKKSLIGFCGGPWTVLTYILGYNSRNTPKFHEIKSNNKHELIVDSINILTKHTIDHLANQILAGADIVQIFDSWAGILPYQEFSEYVIKPTSNIVKTLKEKFPHIKIIGFPKGAGKLYHKYTKETNVDGISCDYDLQLDEMLKLQKNVLVQGNLNPNTILSKNSKIIEESVIKIMDTLSNNRFIFNLGHGILPETPIKNVELIVKLVKNYHSSE.

Substrate-binding positions include 22–26 (RQAGR), F41, D72, Y146, S201, and H317.

The protein belongs to the uroporphyrinogen decarboxylase family. As to quaternary structure, homodimer.

It localises to the cytoplasm. It carries out the reaction uroporphyrinogen III + 4 H(+) = coproporphyrinogen III + 4 CO2. The protein operates within porphyrin-containing compound metabolism; protoporphyrin-IX biosynthesis; coproporphyrinogen-III from 5-aminolevulinate: step 4/4. Catalyzes the decarboxylation of four acetate groups of uroporphyrinogen-III to yield coproporphyrinogen-III. This chain is Uroporphyrinogen decarboxylase, found in Orientia tsutsugamushi (strain Boryong) (Rickettsia tsutsugamushi).